Consider the following 211-residue polypeptide: Rho-related GTP-binding protein RhoF (211 aa).

Methionine 1 is subject to N-acetylmethionine. GTP is bound at residue 26–33; it reads GDGGCGKT. The short motif at 48-56 is the Effector region element; sequence YAPSVFEKY. Residues 73 to 77 and 131 to 134 each bind GTP; these read DTAGQ and CKTD. Cysteine methyl ester is present on cysteine 208. Cysteine 208 carries the S-geranylgeranyl cysteine lipid modification. A propeptide spans 209 to 211 (removed in mature form); the sequence is LLL.

It belongs to the small GTPase superfamily. Rho family.

Its subcellular location is the cell membrane. The protein localises to the cytoplasm. The protein resides in the cytoskeleton. Functionally, plasma membrane-associated small GTPase which cycles between an active GTP-bound and an inactive GDP-bound state. Causes the formation of thin, actin-rich surface projections called filopodia. Functions cooperatively with CDC42 and Rac to generate additional structures, increasing the diversity of actin-based morphology. The protein is Rho-related GTP-binding protein RhoF (Rhof) of Mus musculus (Mouse).